We begin with the raw amino-acid sequence, 527 residues long: Glucose transporter 1B/1C/1D/1F/2B (527 aa).

The disordered stretch occupies residues 1–22 (MTERRDNVSHAPDAIEGPNDGA). Residues 1-43 (MTERRDNVSHAPDAIEGPNDGAHAEDTSPGFFSLENLGVAQVQ) lie on the Cytoplasmic side of the membrane. Residues 44 to 64 (VVGGTLNGYVIGYVAVYLLLY) traverse the membrane as a helical segment. Residues 65 to 118 (LTATECKFTTEGACGGRKIYGCKWSGTTCKFENPKCSEGSDPSDSCKNEVAYTS) are Extracellular-facing. A helical membrane pass occupies residues 119–139 (VYSGIFACAMIVGSMVGSIIA). The Cytoplasmic portion of the chain corresponds to 140-151 (GKCITTFGLKKS). A helical membrane pass occupies residues 152 to 172 (FIIVSITCTIACVVVQVAIEY). Residues 173-175 (NNY) are Extracellular-facing. Residues 176 to 196 (YALCTGRVLIGLGVGILCSVF) traverse the membrane as a helical segment. At 197 to 213 (PMYVNENAHPKLCKMDG) the chain is on the cytoplasmic side. The chain crosses the membrane as a helical span at residues 214–234 (VLFQVFTTLGIMLAAMLGLIL). The Extracellular portion of the chain corresponds to 235 to 249 (DKTGASKEEANMAGR). Residues 250-270 (LHVFSAVPLGLSVAMFLVGMF) traverse the membrane as a helical segment. At 271-299 (LRESTATFAQDDDGKADGGMDPNEYGWGQ) the chain is on the cytoplasmic side. Residues 300–320 (MLWPLFMGAVTAGTLQLTGIN) traverse the membrane as a helical segment. The Extracellular segment spans residues 321–338 (AVMNYAPKITENLGMDPS). A helical membrane pass occupies residues 339–359 (LGNFLVMAWNFVTSLVAIPLA). The Cytoplasmic portion of the chain corresponds to 360 to 372 (SRFTMRQMFITCS). Residues 373-393 (FVASCMCLFLCGIPVFPGVAG) traverse the membrane as a helical segment. Topologically, residues 394-403 (KEVKNGVATT) are extracellular. The helical transmembrane segment at 404-424 (GIALFIAAFEFGVGSCFFVLA) threads the bilayer. The Cytoplasmic segment spans residues 425 to 436 (QDLFPPSFRPKG). The helical transmembrane segment at 437 to 457 (GSFVVMMQFIFNILINLLYPI) threads the bilayer. The Extracellular portion of the chain corresponds to 458–475 (TTEAISGGATGNQDKGQA). Residues 476-496 (VAFILFGLIGLICSVLQFFYL) form a helical membrane-spanning segment. Residues 497–527 (YPYDANQDHENDHGGEPVEQKTYPVEASPRN) are Cytoplasmic-facing. Positions 506 to 515 (ENDHGGEPVE) are enriched in basic and acidic residues. The interval 506–527 (ENDHGGEPVEQKTYPVEASPRN) is disordered.

It belongs to the major facilitator superfamily. Sugar transporter (TC 2.A.1.1) family.

It localises to the membrane. Functionally, facilitative glucose transporter. The protein is Glucose transporter 1B/1C/1D/1F/2B (THT1B) of Trypanosoma brucei brucei.